We begin with the raw amino-acid sequence, 176 residues long: Small ribosomal subunit protein uS4 (176 aa).

The region spanning 103 to 165 is the S4 RNA-binding domain; it reads RRLQTIVYKK…PTSPYAKRRL (63 aa).

The protein belongs to the universal ribosomal protein uS4 family. As to quaternary structure, part of the 30S ribosomal subunit. Contacts protein S5. The interaction surface between S4 and S5 is involved in control of translational fidelity.

One of the primary rRNA binding proteins, it binds directly to 16S rRNA where it nucleates assembly of the body of the 30S subunit. In terms of biological role, with S5 and S12 plays an important role in translational accuracy. The chain is Small ribosomal subunit protein uS4 from Hyperthermus butylicus (strain DSM 5456 / JCM 9403 / PLM1-5).